The following is a 221-amino-acid chain: GTP-binding nuclear protein Ran-B1 (221 aa).

Residues 10-174 form the Small GTPase Ran-type domain; that stretch reads DYPSFKLVIV…LYLARKLAGD (165 aa). 21–28 serves as a coordination point for GTP; the sequence is DGGTGKTT. The tract at residues 40–48 is switch-I; the sequence is KKYEPTIGV. GTP-binding positions include Gly-71, 125 to 128, and 153 to 155; these read NKVD and SAK. The segment at 71–87 is switch-II; the sequence is GQEKFGGLRDGYYIHGQ.

Belongs to the small GTPase superfamily. Ran family. In terms of assembly, found in a nuclear export complex with RanGTP, exportin and pre-miRNA.

Its subcellular location is the nucleus. GTP-binding protein involved in nucleocytoplasmic transport. Required for the import of protein into the nucleus and also for RNA export. Involved in chromatin condensation and control of cell cycle. This Nicotiana tabacum (Common tobacco) protein is GTP-binding nuclear protein Ran-B1 (RAN-B1).